We begin with the raw amino-acid sequence, 76 residues long: Protein CASC2, isoforms 1/2 (76 aa).

A disordered region spans residues 1–20 (MAGTRGLMLLGPGPVAGPRD).

In Homo sapiens (Human), this protein is Protein CASC2, isoforms 1/2 (CASC2).